A 93-amino-acid chain; its full sequence is Putative pterin-4-alpha-carbinolamine dehydratase (93 aa).

This sequence belongs to the pterin-4-alpha-carbinolamine dehydratase family.

The catalysed reaction is (4aS,6R)-4a-hydroxy-L-erythro-5,6,7,8-tetrahydrobiopterin = (6R)-L-erythro-6,7-dihydrobiopterin + H2O. This is Putative pterin-4-alpha-carbinolamine dehydratase from Nostoc punctiforme (strain ATCC 29133 / PCC 73102).